The sequence spans 385 residues: UDP-N-acetylglucosamine--N-acetylmuramyl-(pentapeptide) pyrophosphoryl-undecaprenol N-acetylglucosamine transferase (385 aa).

UDP-N-acetyl-alpha-D-glucosamine-binding positions include threonine 11–glycine 13, asparagine 117, arginine 160, serine 215, and glutamine 317.

This sequence belongs to the glycosyltransferase 28 family. MurG subfamily.

The protein resides in the cell inner membrane. The enzyme catalyses di-trans,octa-cis-undecaprenyl diphospho-N-acetyl-alpha-D-muramoyl-L-alanyl-D-glutamyl-meso-2,6-diaminopimeloyl-D-alanyl-D-alanine + UDP-N-acetyl-alpha-D-glucosamine = di-trans,octa-cis-undecaprenyl diphospho-[N-acetyl-alpha-D-glucosaminyl-(1-&gt;4)]-N-acetyl-alpha-D-muramoyl-L-alanyl-D-glutamyl-meso-2,6-diaminopimeloyl-D-alanyl-D-alanine + UDP + H(+). It participates in cell wall biogenesis; peptidoglycan biosynthesis. In terms of biological role, cell wall formation. Catalyzes the transfer of a GlcNAc subunit on undecaprenyl-pyrophosphoryl-MurNAc-pentapeptide (lipid intermediate I) to form undecaprenyl-pyrophosphoryl-MurNAc-(pentapeptide)GlcNAc (lipid intermediate II). The protein is UDP-N-acetylglucosamine--N-acetylmuramyl-(pentapeptide) pyrophosphoryl-undecaprenol N-acetylglucosamine transferase of Rickettsia typhi (strain ATCC VR-144 / Wilmington).